The chain runs to 260 residues: MPKSRRAVSLSVLIGAVIAALAGALIAVTVPARPNRPEADREALWKIVHDRCEFGYRRTGAYAPCTFVDEQSGTALYKADFDPYQFLLIPLARITGIEDPALRESAGRNYLYDAWAARFLVTARLNNSLPESDVVLTINPKNARTQDQLHIHISCSSPTTSAALRNVDTSEYVGWKQLPIDLGGRRFQGLAVDTKAFESRNLFRDIYLKVTADGKKMENASIAVANVAQDQFLLLLAEGTEDQPVAAETLQDHDCSITKS.

A helical transmembrane segment spans residues 10-30 (LSVLIGAVIAALAGALIAVTV).

It belongs to the Cdh family.

It is found in the cell membrane. It catalyses the reaction a CDP-1,2-diacyl-sn-glycerol + H2O = a 1,2-diacyl-sn-glycero-3-phosphate + CMP + 2 H(+). It functions in the pathway phospholipid metabolism; CDP-diacylglycerol degradation; phosphatidate from CDP-diacylglycerol: step 1/1. The polypeptide is Probable CDP-diacylglycerol pyrophosphatase (cdh) (Mycobacterium bovis (strain ATCC BAA-935 / AF2122/97)).